A 51-amino-acid polypeptide reads, in one-letter code: Large ribosomal subunit protein eL39 (51 aa).

It belongs to the eukaryotic ribosomal protein eL39 family.

The chain is Large ribosomal subunit protein eL39 (rpl39e) from Pyrococcus horikoshii (strain ATCC 700860 / DSM 12428 / JCM 9974 / NBRC 100139 / OT-3).